The chain runs to 2472 residues: Centrosomal protein of 290 kDa (2472 aa).

The self-association (with itself or C-terminus) stretch occupies residues 1-689 (MPPNIKWKEL…MESKNAEGIF (689 aa)). Coiled coils occupy residues 59-747 (MKMK…LRQS), 1129-1392 (RQRI…QQSK), and 1459-1492 (QVIL…ILSR). Positions 128–164 (DRELEDMEKELDKEKKVNEQLALRNEEAENENSKLRR) are disordered. Positions 137-164 (ELDKEKKVNEQLALRNEEAENENSKLRR) are enriched in basic and acidic residues. The segment at 690 to 890 (DASLHLKAQV…TVLQVNEKSL (201 aa)) is interaction with IQCB1. Disordered regions lie at residues 1691–1713 (AHKD…SRAP) and 2451–2472 (PSPL…FPIY). Residues 1697 to 1713 (SLKSELQAQKEANSRAP) show a composition bias toward polar residues. Residues 1960-2472 (TTGMTVDQVL…GESPHSFPIY (513 aa)) are self-association (with itself or N-terminus).

In terms of assembly, part of the tectonic-like complex (also named B9 complex). Interacts with ATF4 via its N-terminal region. Associates with the BBSome complex, interacting (via N-terminus) with BBS4. Interacts with IQCB1/NPHP5; IQCB1 and CEP290/NPHP6 are proposed to form a functional NPHP5-6 module localized to the centrosome. Interacts with NPHP4; the interaction likely requires additional interactors. Interacts with ZNF423, FAM161A, CEP162, CEP162, CEP131, TALPID3, CCDC13, CC2D2A, RPGRIP1. Can self-associate (homo- or heteromeric). Interacts with CCP110; required for suppressing cilia formation. Interacts with RPGR. Associates (via C-terminus) with microtubules; association to microtubule is reduced in response to cellular stress, such as ultraviolet light (UV) radiation or heat shock, in a process that requires p38 MAP kinase signaling. Interacts with FAM161A. Interacts with PCM1. Interacts with CCDC66. Interacts with ARMC9 and CSPP1. Post-translationally, ubiquitinated. May undergo monoubiquitination; monoubiquitination is inhibited in response to cellular stress, such as ultraviolet light (UV) radiation or heat shock, but does not cause its displacement from centriolar satellites. Expressed in multiple organs during early postnatal development, with highest levels in hindbrain.

Its subcellular location is the cytoplasm. It localises to the cytoskeleton. The protein resides in the microtubule organizing center. The protein localises to the centrosome. It is found in the centriolar satellite. Its subcellular location is the nucleus. It localises to the centriole. The protein resides in the cell projection. The protein localises to the cilium. It is found in the cilium basal body. Its subcellular location is the cytoplasmic vesicle. In terms of biological role, involved in early and late steps in cilia formation. Its association with CCP110 is required for inhibition of primary cilia formation by CCP110. May play a role in early ciliogenesis in the disappearance of centriolar satellites and in the transition of primary ciliar vesicles (PCVs) to capped ciliary vesicles (CCVs). Required for the centrosomal recruitment of RAB8A and for the targeting of centriole satellite proteins to centrosomes such as of PCM1. Required for the correct localization of ciliary and phototransduction proteins in retinal photoreceptor cells; may play a role in ciliary transport processes. Required for efficient recruitment of RAB8A to primary cilium. In the ciliary transition zone is part of the tectonic-like complex (also named B9 complex) which is required for tissue-specific ciliogenesis and may regulate ciliary membrane composition. Involved in regulation of the BBSome complex integrity, specifically for presence of BBS2, BBS5 and BBS8/TTC8 in the complex, and in ciliary targeting of selected BBSome cargos. May play a role in controlling entry of the BBSome complex to cilia possibly implicating IQCB1/NPHP5. Activates ATF4-mediated transcription. The protein is Centrosomal protein of 290 kDa of Mus musculus (Mouse).